A 331-amino-acid chain; its full sequence is Cathepsin 7 (331 aa).

Positions M1–A17 are cleaved as a signal peptide. Residues A18 to K111 constitute a propeptide, activation peptide. The Nuclear localization signal motif lies at K33–A50. Residue N72 is glycosylated (N-linked (GlcNAc...) asparagine). 3 cysteine pairs are disulfide-bonded: C133-C176, C167-C209, and C267-C320. The active site involves C136. Active-site residues include H274 and N298.

The protein belongs to the peptidase C1 family. As to expression, expressed in placenta. Expressed in parietal and spiral artery-associated trophoblast giant cells, most abundantly during the phase of trophoblast invasion. From 14.5 dpc onwards, expressed at lower levels in labyrinth trophoblast cells. Expressed in trophoblast stem cells. Expressed in heart, liver and testis.

The protein resides in the endosome. It is found in the lysosome. The protein localises to the cytoplasm. Its subcellular location is the perinuclear region. It localises to the golgi apparatus. The protein resides in the nucleus. It is found in the secreted. The protein localises to the extracellular space. Involved in trophoblast cell proliferation and differentiation probably by affecting mitotic cell cycle progression. Proteolytic activity and nuclear localization are essential for its role in cell cycle progression. The chain is Cathepsin 7 from Mus musculus (Mouse).